We begin with the raw amino-acid sequence, 396 residues long: S-adenosylmethionine synthase (396 aa).

Histidine 14 is an ATP binding site. Mg(2+) is bound at residue aspartate 16. A K(+)-binding site is contributed by glutamate 42. 2 residues coordinate L-methionine: glutamate 55 and glutamine 98. The interval 98–108 (QSPDIALGVNE) is flexible loop. Residues 174-176 (DGK), 241-242 (RF), aspartate 250, 256-257 (RK), alanine 273, and lysine 277 contribute to the ATP site. Residue aspartate 250 coordinates L-methionine. Lysine 281 lines the L-methionine pocket.

The protein belongs to the AdoMet synthase family. In terms of assembly, homotetramer; dimer of dimers. Mg(2+) serves as cofactor. K(+) is required as a cofactor.

It localises to the cytoplasm. It catalyses the reaction L-methionine + ATP + H2O = S-adenosyl-L-methionine + phosphate + diphosphate. The protein operates within amino-acid biosynthesis; S-adenosyl-L-methionine biosynthesis; S-adenosyl-L-methionine from L-methionine: step 1/1. In terms of biological role, catalyzes the formation of S-adenosylmethionine (AdoMet) from methionine and ATP. The overall synthetic reaction is composed of two sequential steps, AdoMet formation and the subsequent tripolyphosphate hydrolysis which occurs prior to release of AdoMet from the enzyme. The polypeptide is S-adenosylmethionine synthase (Fervidobacterium nodosum (strain ATCC 35602 / DSM 5306 / Rt17-B1)).